A 632-amino-acid polypeptide reads, in one-letter code: Threonine--tRNA ligase (632 aa).

The 59-residue stretch at 1–59 (MIRITFLAKQKVEEYSSRVTGFDILQPDISKEAIALRVNGELYDLSREIESDTEIDVIQ) folds into the TGS domain. Positions 240–532 (DHRRIAKDMD…LIEHYAGKFP (293 aa)) are catalytic. Residues Cys332, His383, and His509 each contribute to the Zn(2+) site.

The protein belongs to the class-II aminoacyl-tRNA synthetase family. Homodimer. Zn(2+) serves as cofactor.

The protein resides in the cytoplasm. The enzyme catalyses tRNA(Thr) + L-threonine + ATP = L-threonyl-tRNA(Thr) + AMP + diphosphate + H(+). Catalyzes the attachment of threonine to tRNA(Thr) in a two-step reaction: L-threonine is first activated by ATP to form Thr-AMP and then transferred to the acceptor end of tRNA(Thr). Also edits incorrectly charged L-seryl-tRNA(Thr). This chain is Threonine--tRNA ligase, found in Wolbachia sp. subsp. Brugia malayi (strain TRS).